A 701-amino-acid polypeptide reads, in one-letter code: Arachidonate 12-lipoxygenase, 12R-type (701 aa).

The PLAT domain maps to 2–119 (ATYKVKVATG…TLALREATGK (118 aa)). The Lipoxygenase domain occupies 120–701 (ITADDTLPIL…PVLIENSISI (582 aa)). H398, H403, H578, N582, and I701 together coordinate Fe cation.

Belongs to the lipoxygenase family. The cofactor is Fe cation. Expressed in skin epidermis and other stratified epithelia including tongue and forestomach. Low levels of expression are found in trachea, brain and lung. Not expressed in intestine, liver, kidney, adipose tissue, muscle or hematopoietic cells.

Its subcellular location is the cytoplasm. It localises to the perinuclear region. The catalysed reaction is 1-O-methyl-(5Z,8Z,11Z,14Z)-eicosatetraenoate + O2 = 1-O-methyl (5Z,8Z,10E,12R,14Z)-hydroperoxyiecosatetraenoate. It catalyses the reaction 1-O-methyl-(5Z,8Z,11Z,14Z)-eicosatetraenoate + O2 = 1-O-methyl-8-hydroperoxy-(5Z,9E,11Z,14Z)-eicosatetraenoate. It carries out the reaction (5Z,8Z,11Z,14Z)-eicosatetraenoate + O2 = (12R)-hydroperoxy-(5Z,8Z,10E,14Z)-eicosatetraenoate. The enzyme catalyses N-[omega-(9Z,12Z)-octadecadienoyloxy]acyl-beta-D-glucosyl-(1&lt;-&gt;1)-octadecasphing-4E-enine + O2 = N-[omega-(9R)-hydroperoxy-(10E,12Z)-octadecadienoyloxy]acyl-beta-D-glucosyl-(1&lt;-&gt;1)-octadecasphing-4E-enine. The catalysed reaction is a N-[omega-(9Z,12Z)-octadecadienoyloxy]-acylsphin-4E-enine + O2 = a N-[omega-(9R)-hydroperoxy-(10E,12Z)-octadecadienoyloxy]-acylsphin-4E-enine. It catalyses the reaction (6Z,9Z,12Z)-octadecatrienoate + O2 = 10-hydroperoxy-(6Z,8E,12Z)-octadecatrienoate. It carries out the reaction (4Z,7Z,10Z,13Z,16Z,19Z)-docosahexaenoate + O2 = 14-hydroperoxy-(4Z,7Z,10Z,12E,16Z,19Z)-docosahexaenoate. The enzyme catalyses (8Z,11Z,14Z)-eicosatrienoate + O2 = (8Z,10E,14Z)-12-hydroperoxyeicosatrienoate. The catalysed reaction is (5Z,8Z,11Z,14Z,17Z)-eicosapentaenoate + O2 = (5Z,7Z,8Z,10E,14Z,17Z)-12-hydroperoxyeicosapentaenoate. It catalyses the reaction (6Z,9Z,12Z)-octadecatrienoate + O2 = 10R-hydroperoxy-(6Z,8E,12Z)-octadecatrienoate. It carries out the reaction 1-O-methyl-(5Z,8Z,11Z,14Z)-eicosatetraenoate + O2 = 1-O-methyl-(8R)-hydroperoxy-(5Z,9E,11Z,14Z)-eicosatrienoate. The enzyme catalyses 1-O-methyl-(9Z,12Z)-octadecadienoate + O2 = 1-O-methyl-(9R)-hydroperoxy-(10E,12Z)-octadecadienoate. The catalysed reaction is 1-O-methyl-20-hydroxy-(5Z,8Z,11Z,14Z)-eicosatetraenoate + O2 = 1-O-methyl-8-hydroperoxy-20-hydroxy-(5Z,9E,11Z,14Z)-eicosatetraenoate. It catalyses the reaction 1-O-methyl-20-hydroxy-(5Z,8Z,11Z,14Z)-eicosatetraenoate + O2 = 1-O-methyl-12-hydroperoxy-20-hydroxy-(5Z,8Z,10E,14Z)-eicosatetraenoate. It carries out the reaction 1-O-methyl-20-hydroxy-(5Z,8Z,11Z,14Z)-eicosatetraenoate + O2 = 1-O-methyl-9-hydroperoxy-20-hydroxy-(5Z,7E,11Z,14Z)-eicosatetraenoate. The enzyme catalyses 1-O-methyl-(9Z,12Z)-octadecadienoate + O2 = 1-O-methyl-(13S)-hydroperoxy-(9Z,11E)-octadecadienoate. The protein operates within lipid metabolism; hydroperoxy eicosatetraenoic acid biosynthesis. It participates in lipid metabolism; sphingolipid metabolism. With respect to regulation, increased by calcium. Catalyzes the regio and stereo-specific incorporation of a single molecule of dioxygen into free and esterified polyunsaturated fatty acids generating lipid hydroperoxides that can be further reduced to the corresponding hydroxy species. Does not convert arachidonic acid to (12R)-hydroperoxyeicosatetraenoic acid/(12R)-HPETE. In the skin, acts upstream of ALOXE3 on the lineolate moiety of esterified omega-hydroxyacyl-sphingosine (EOS) ceramides to produce an epoxy-ketone derivative, a crucial step in the conjugation of omega-hydroxyceramide to membrane proteins. Therefore plays a crucial role in the synthesis of corneocytes lipid envelope and the establishment of the skin barrier to water loss. May also play a role in the regulation of the expression of airway mucins. This Mus musculus (Mouse) protein is Arachidonate 12-lipoxygenase, 12R-type.